We begin with the raw amino-acid sequence, 163 residues long: 16S rRNA aminocarboxypropyltransferase (163 aa).

Residues threonine 18, isoleucine 66, leucine 87, and serine 106 each contribute to the S-adenosyl-L-methionine site.

It belongs to the TDD superfamily. TSR3 family.

It localises to the cytoplasm. The catalysed reaction is an N(1)-methylpseudouridine in rRNA + S-adenosyl-L-methionine = N(1)-methyl-N(3)-[(3S)-3-amino-3-carboxypropyl]pseudouridine in rRNA + S-methyl-5'-thioadenosine + H(+). In terms of biological role, aminocarboxypropyltransferase that catalyzes the aminocarboxypropyl transfer on pseudouridine corresponding to position 914 in M.jannaschii 16S rRNA. It constitutes the last step in biosynthesis of the hypermodified N1-methyl-N3-(3-amino-3-carboxypropyl) pseudouridine (m1acp3-Psi). The sequence is that of 16S rRNA aminocarboxypropyltransferase from Thermoplasma acidophilum (strain ATCC 25905 / DSM 1728 / JCM 9062 / NBRC 15155 / AMRC-C165).